Consider the following 227-residue polypeptide: Ribose-5-phosphate isomerase A (227 aa).

Substrate contacts are provided by residues 26-29 (TGST), 82-85 (DGAD), and 95-98 (KGGG). The active-site Proton acceptor is the Glu-104. Lys-122 serves as a coordination point for substrate.

Belongs to the ribose 5-phosphate isomerase family. Homodimer.

The catalysed reaction is aldehydo-D-ribose 5-phosphate = D-ribulose 5-phosphate. The protein operates within carbohydrate degradation; pentose phosphate pathway; D-ribose 5-phosphate from D-ribulose 5-phosphate (non-oxidative stage): step 1/1. Functionally, catalyzes the reversible conversion of ribose-5-phosphate to ribulose 5-phosphate. This Streptococcus pneumoniae serotype 2 (strain D39 / NCTC 7466) protein is Ribose-5-phosphate isomerase A.